We begin with the raw amino-acid sequence, 184 residues long: dCTP deaminase (184 aa).

Residues 97 to 102 (RSTFAR) and Asp-113 each bind dCTP. The Proton donor/acceptor role is filled by Glu-123. DCTP-binding residues include Tyr-155 and Gln-162.

The protein belongs to the dCTP deaminase family. As to quaternary structure, homotrimer.

It catalyses the reaction dCTP + H2O + H(+) = dUTP + NH4(+). Its pathway is pyrimidine metabolism; dUMP biosynthesis; dUMP from dCTP (dUTP route): step 1/2. Catalyzes the deamination of dCTP to dUTP. This chain is dCTP deaminase, found in Saccharolobus solfataricus (strain ATCC 35092 / DSM 1617 / JCM 11322 / P2) (Sulfolobus solfataricus).